The chain runs to 159 residues: Ribosomal RNA large subunit methyltransferase H (159 aa).

S-adenosyl-L-methionine is bound by residues Leu-76, Gly-108, and 127–132 (FGLLTL).

It belongs to the RNA methyltransferase RlmH family. In terms of assembly, homodimer.

The protein resides in the cytoplasm. It carries out the reaction pseudouridine(1915) in 23S rRNA + S-adenosyl-L-methionine = N(3)-methylpseudouridine(1915) in 23S rRNA + S-adenosyl-L-homocysteine + H(+). Functionally, specifically methylates the pseudouridine at position 1915 (m3Psi1915) in 23S rRNA. The sequence is that of Ribosomal RNA large subunit methyltransferase H from Streptococcus equi subsp. zooepidemicus (strain MGCS10565).